Reading from the N-terminus, the 248-residue chain is Phycocyanobilin:ferredoxin oxidoreductase (248 aa).

This sequence belongs to the HY2 family.

The catalysed reaction is (2R,3Z)-phycocyanobilin + 4 oxidized [2Fe-2S]-[ferredoxin] = biliverdin IXalpha + 4 reduced [2Fe-2S]-[ferredoxin] + 4 H(+). Its function is as follows. Catalyzes the four-electron reduction of biliverdin IX-alpha (2-electron reduction at both the A and D rings); the reaction proceeds via an isolatable 2-electron intermediate, 181,182-dihydrobiliverdin. In Synechocystis sp. (strain ATCC 27184 / PCC 6803 / Kazusa), this protein is Phycocyanobilin:ferredoxin oxidoreductase (pcyA).